The following is a 677-amino-acid chain: Protein asunder (677 aa).

A coiled-coil region spans residues Arg515–Ser540. A compositionally biased stretch (low complexity) spans Glu578–Leu598. The disordered stretch occupies residues Glu578 to Arg604. Positions Leu598–Arg604 match the Nuclear localization signal (NLS) motif.

It belongs to the Integrator subunit 13 family. As to quaternary structure, belongs to the multiprotein complex Integrator, at least composed of IntS1, IntS2, IntS3, IntS4, omd/IntS5, IntS6, defl/IntS7, IntS8, IntS9, IntS10, IntS11, IntS12, asun/IntS13, IntS14 and IntS15. The core complex associates with protein phosphatase 2A subunits mts/PP2A and Pp2A-29B, to form the Integrator-PP2A (INTAC) complex. In terms of processing, phosphorylated.

It localises to the nucleus. The protein resides in the cytoplasm. It is found in the perinuclear region. Its function is as follows. Component of the integrator complex, a multiprotein complex that terminates RNA polymerase II (Pol II) transcription in the promoter-proximal region of genes. The integrator complex provides a quality checkpoint during transcription elongation by driving premature transcription termination of transcripts that are unfavorably configured for transcriptional elongation: the complex terminates transcription by (1) catalyzing dephosphorylation of the C-terminal domain (CTD) of Pol II subunit Polr2A/Rbp1 and Spt5, and (2) degrading the exiting nascent RNA transcript via endonuclease activity. The integrator complex is also involved in the 3'-end processing of the U7 snRNA, and also the spliceosomal snRNAs U1, U2, U4 and U5. In Drosophila willistoni (Fruit fly), this protein is Protein asunder (asun).